Consider the following 216-residue polypeptide: UDP-N-acetylglucosamine transferase subunit ALG14 (216 aa).

Topologically, residues 1-3 (MVC) are lumenal. The helical transmembrane segment at 4–24 (VLTLAASAGGLAVLLIVRLWA) threads the bilayer. The Cytoplasmic segment spans residues 25–216 (VLRSHPVTPR…PKSVYLGRIV (192 aa)).

The protein belongs to the ALG14 family. In terms of assembly, forms with ALG13 the active heterodimeric UDP-N-acetylglucosamine transferase complex.

It localises to the endoplasmic reticulum membrane. Functionally, part of the UDP-N-acetylglucosamine transferase complex that operates in the biosynthetic pathway of dolichol-linked oligosaccharides, the glycan precursors employed in protein asparagine (N)-glycosylation. The assembly of dolichol-linked oligosaccharides begins on the cytosolic side of the endoplasmic reticulum membrane and finishes in its lumen. The sequential addition of sugars to dolichol pyrophosphate produces dolichol-linked oligosaccharides containing fourteen sugars, including two GlcNAcs, nine mannoses and three glucoses. Once assembled, the oligosaccharides are transferred from the lipid to nascent proteins by oligosaccharyltransferases. Functions as a protein-membrane adapter recruiting ALG13 at the cytoplasmic face of the endoplasmic reticulum, where the complex catalyzes the second step of dolichol pyrophosphate biosynthesis, transferring a beta1,4-linked N-acetylglucosamine (GlcNAc) from UDP-GlcNAc to GlcNAc-pyrophosphatedolichol (Gn-PDol) to produce N,N'-diacetylchitobiosyl diphosphodolichol. N,N'-diacetylchitobiosyl diphosphodolichol is a substrate for ALG1, the following enzyme in the biosynthetic pathway. This chain is UDP-N-acetylglucosamine transferase subunit ALG14, found in Rattus norvegicus (Rat).